Reading from the N-terminus, the 196-residue chain is Serine recombinase PinR (196 aa).

The Resolvase/invertase-type recombinase catalytic domain maps to 3–143 (RIFAYCRIST…SGIVRARGAG (141 aa)). The O-(5'-phospho-DNA)-serine intermediate role is filled by S11.

This sequence belongs to the site-specific recombinase resolvase family.

The chain is Serine recombinase PinR (pinR) from Escherichia coli (strain K12).